The following is a 172-amino-acid chain: 6,7-dimethyl-8-ribityllumazine synthase (172 aa).

5-amino-6-(D-ribitylamino)uracil is bound by residues F24, 58 to 60 (ALE), and 82 to 84 (AVI). 87 to 88 (ET) provides a ligand contact to (2S)-2-hydroxy-3-oxobutyl phosphate. Catalysis depends on H90, which acts as the Proton donor. A 5-amino-6-(D-ribitylamino)uracil-binding site is contributed by N115. R129 contacts (2S)-2-hydroxy-3-oxobutyl phosphate. The interval 150 to 172 (ALDQLGDDDEDEEEDEDDEEERA) is disordered. Residues 154–172 (LGDDDEDEEEDEDDEEERA) are compositionally biased toward acidic residues.

Belongs to the DMRL synthase family.

The enzyme catalyses (2S)-2-hydroxy-3-oxobutyl phosphate + 5-amino-6-(D-ribitylamino)uracil = 6,7-dimethyl-8-(1-D-ribityl)lumazine + phosphate + 2 H2O + H(+). It participates in cofactor biosynthesis; riboflavin biosynthesis; riboflavin from 2-hydroxy-3-oxobutyl phosphate and 5-amino-6-(D-ribitylamino)uracil: step 1/2. Catalyzes the formation of 6,7-dimethyl-8-ribityllumazine by condensation of 5-amino-6-(D-ribitylamino)uracil with 3,4-dihydroxy-2-butanone 4-phosphate. This is the penultimate step in the biosynthesis of riboflavin. In Burkholderia multivorans (strain ATCC 17616 / 249), this protein is 6,7-dimethyl-8-ribityllumazine synthase.